We begin with the raw amino-acid sequence, 341 residues long: tRNA N6-adenosine threonylcarbamoyltransferase (341 aa).

Fe cation contacts are provided by H115 and H119. Substrate-binding positions include 138–142 (VVSGG), D171, G184, D188, and N279. D307 contributes to the Fe cation binding site.

The protein belongs to the KAE1 / TsaD family. Fe(2+) serves as cofactor.

Its subcellular location is the cytoplasm. The enzyme catalyses L-threonylcarbamoyladenylate + adenosine(37) in tRNA = N(6)-L-threonylcarbamoyladenosine(37) in tRNA + AMP + H(+). In terms of biological role, required for the formation of a threonylcarbamoyl group on adenosine at position 37 (t(6)A37) in tRNAs that read codons beginning with adenine. Is involved in the transfer of the threonylcarbamoyl moiety of threonylcarbamoyl-AMP (TC-AMP) to the N6 group of A37, together with TsaE and TsaB. TsaD likely plays a direct catalytic role in this reaction. This chain is tRNA N6-adenosine threonylcarbamoyltransferase, found in Clostridium kluyveri (strain NBRC 12016).